The chain runs to 211 residues: Thymidylate kinase (211 aa).

Position 11–18 (11–18 (GPDGAGKT)) interacts with ATP.

The protein belongs to the thymidylate kinase family.

The catalysed reaction is dTMP + ATP = dTDP + ADP. Phosphorylation of dTMP to form dTDP in both de novo and salvage pathways of dTTP synthesis. The polypeptide is Thymidylate kinase (Streptococcus agalactiae serotype Ia (strain ATCC 27591 / A909 / CDC SS700)).